We begin with the raw amino-acid sequence, 234 residues long: Orotidine 5'-phosphate decarboxylase (234 aa).

Substrate is bound by residues aspartate 11, lysine 33, aspartate 60 to threonine 69, threonine 120, arginine 181, glutamine 190, glycine 210, and arginine 211. The active-site Proton donor is lysine 62.

This sequence belongs to the OMP decarboxylase family. Type 1 subfamily. As to quaternary structure, homodimer.

The catalysed reaction is orotidine 5'-phosphate + H(+) = UMP + CO2. It participates in pyrimidine metabolism; UMP biosynthesis via de novo pathway; UMP from orotate: step 2/2. In terms of biological role, catalyzes the decarboxylation of orotidine 5'-monophosphate (OMP) to uridine 5'-monophosphate (UMP). The chain is Orotidine 5'-phosphate decarboxylase from Shewanella sediminis (strain HAW-EB3).